A 59-amino-acid polypeptide reads, in one-letter code: MLKFAKFRRECVAEFRRVVWPARTQVHTAVKVVLVSTVVMALFLGLIDALFVALLSFFF.

The chain crosses the membrane as a helical span at residues 39–59; it reads VMALFLGLIDALFVALLSFFF.

The protein belongs to the SecE/SEC61-gamma family. As to quaternary structure, component of the Sec protein translocase complex. Heterotrimer consisting of SecY, SecE and SecG subunits. The heterotrimers can form oligomers, although 1 heterotrimer is thought to be able to translocate proteins. Interacts with the ribosome. Interacts with SecDF, and other proteins may be involved. Interacts with SecA.

It is found in the cell inner membrane. Its function is as follows. Essential subunit of the Sec protein translocation channel SecYEG. Clamps together the 2 halves of SecY. May contact the channel plug during translocation. The protein is Protein translocase subunit SecE of Treponema pallidum (strain Nichols).